Here is a 308-residue protein sequence, read N- to C-terminus: Cytochrome b (308 aa).

The next 4 membrane-spanning stretches (helical) occupy residues 1-21 (FGSLLGLCLITQIITGLLLAM), 45-66 (WLIRNLHANGASFFFICIYLHI), 81-101 (WNIGVILLLTLMATAFVGYVL), and 146-166 (FFAFHFLLPFVIAGLTLVHLT). Residues H51 and H65 each coordinate heme b. 2 residues coordinate heme b: H150 and H164. H169 lines the a ubiquinone pocket. 3 helical membrane passes run 194 to 214 (IKDLLGFALMLIPLITLALFS), 256 to 276 (LGGVLALAASVLILFLIPLLH), and 288 to 308 (LSQILFWTLVADLLILTWVGS).

The protein belongs to the cytochrome b family. The cytochrome bc1 complex contains 11 subunits: 3 respiratory subunits (MT-CYB, CYC1 and UQCRFS1), 2 core proteins (UQCRC1 and UQCRC2) and 6 low-molecular weight proteins (UQCRH/QCR6, UQCRB/QCR7, UQCRQ/QCR8, UQCR10/QCR9, UQCR11/QCR10 and a cleavage product of UQCRFS1). This cytochrome bc1 complex then forms a dimer. Requires heme b as cofactor.

Its subcellular location is the mitochondrion inner membrane. Functionally, component of the ubiquinol-cytochrome c reductase complex (complex III or cytochrome b-c1 complex) that is part of the mitochondrial respiratory chain. The b-c1 complex mediates electron transfer from ubiquinol to cytochrome c. Contributes to the generation of a proton gradient across the mitochondrial membrane that is then used for ATP synthesis. The protein is Cytochrome b (MT-CYB) of Corvus corax (Common raven).